The primary structure comprises 851 residues: DNA mismatch repair protein MutS (851 aa).

602–609 contributes to the ATP binding site; the sequence is GPNMSGKS.

It belongs to the DNA mismatch repair MutS family.

Functionally, this protein is involved in the repair of mismatches in DNA. It is possible that it carries out the mismatch recognition step. This protein has a weak ATPase activity. The chain is DNA mismatch repair protein MutS from Streptococcus pyogenes serotype M6 (strain ATCC BAA-946 / MGAS10394).